A 272-amino-acid polypeptide reads, in one-letter code: Phosphatidylglycerol--prolipoprotein diacylglyceryl transferase (272 aa).

3 consecutive transmembrane segments (helical) span residues 19 to 39 (ISIR…YFLV), 58 to 78 (LNTV…VVFY), and 94 to 114 (WHGG…GLIF). Arginine 141 is a binding site for a 1,2-diacyl-sn-glycero-3-phospho-(1'-sn-glycerol). 2 helical membrane-spanning segments follow: residues 207–227 (GTIL…IENF) and 234–254 (LGFI…MILC).

It belongs to the Lgt family.

The protein resides in the cell inner membrane. The enzyme catalyses L-cysteinyl-[prolipoprotein] + a 1,2-diacyl-sn-glycero-3-phospho-(1'-sn-glycerol) = an S-1,2-diacyl-sn-glyceryl-L-cysteinyl-[prolipoprotein] + sn-glycerol 1-phosphate + H(+). It functions in the pathway protein modification; lipoprotein biosynthesis (diacylglyceryl transfer). Functionally, catalyzes the transfer of the diacylglyceryl group from phosphatidylglycerol to the sulfhydryl group of the N-terminal cysteine of a prolipoprotein, the first step in the formation of mature lipoproteins. This is Phosphatidylglycerol--prolipoprotein diacylglyceryl transferase from Desulfotalea psychrophila (strain LSv54 / DSM 12343).